Consider the following 161-residue polypeptide: Serine-protein kinase RsbW (161 aa).

It belongs to the anti-sigma-factor family.

The enzyme catalyses L-seryl-[protein] + ATP = O-phospho-L-seryl-[protein] + ADP + H(+). It catalyses the reaction L-threonyl-[protein] + ATP = O-phospho-L-threonyl-[protein] + ADP + H(+). Functionally, negative regulator of sigma-B activity. Phosphorylates and inactivates its specific antagonist protein, RsbV. Upon phosphorylation of RsbV, RsbW is released and binds to sigma-B, thereby blocking its ability to form an RNA polymerase holoenzyme (E-sigma-B). In Bacillus licheniformis (strain ATCC 14580 / DSM 13 / JCM 2505 / CCUG 7422 / NBRC 12200 / NCIMB 9375 / NCTC 10341 / NRRL NRS-1264 / Gibson 46), this protein is Serine-protein kinase RsbW.